The chain runs to 628 residues: Cystathionine gamma-synthase-like enzyme iboG2 (628 aa).

Position 313 (Y313) interacts with substrate. K417 carries the N6-(pyridoxal phosphate)lysine modification.

The protein belongs to the trans-sulfuration enzymes family. It depends on pyridoxal 5'-phosphate as a cofactor.

It functions in the pathway secondary metabolite biosynthesis. Functionally, cystathionine gamma-synthase-like enzyme; part of the gene cluster that mediates the biosynthesis of the psychoactive metabolites ibotenic acid and muscimol. The first committed step is glutamate hydroxylation by the 2-oxoglutarate-dependent dioxygenase iboH, and the last step is decarboxylation of ibotenic acid to muscimol by the decarboxylase iboD. The order of the intermediate reactions is somewhat ambiguous. IboA likely activates the carboxylic acid at position 5 to introduce an amide bond, and the flavin monooxygenase iboF generates the N-O bond. There are several options for the latter step. One option is that iboF directly hydroxylates the amide nitrogen formed by iboA to produce a hydroxamic acid species. Another option is that iboF hydroxylates an external N-containing compound, whose resulting N-O bond is subsequently introduced into the hydroxyglutamate scaffold. The paralogous PLP-dependent cystathionine gamma-synthase-like enzymes iboG1 and iboG2 are likely involved in substitution of the OH group at position 3 by the O-N moiety. The first cyclic intermediate is most probably tricholomic acid which is likely desaturated to ibotenic acid by the cytochrome P450 monooxygenase iboC. In Amanita muscaria (strain Koide BX008), this protein is Cystathionine gamma-synthase-like enzyme iboG2.